The primary structure comprises 262 residues: Ribose-5-phosphate isomerase A (262 aa).

Substrate-binding positions include 33 to 36 (TGST), 89 to 92 (DGTD), and 102 to 105 (KGGG). Glutamate 111 acts as the Proton acceptor in catalysis. Position 129 (lysine 129) interacts with substrate.

It belongs to the ribose 5-phosphate isomerase family. In terms of assembly, homodimer.

The enzyme catalyses aldehydo-D-ribose 5-phosphate = D-ribulose 5-phosphate. It participates in carbohydrate degradation; pentose phosphate pathway; D-ribose 5-phosphate from D-ribulose 5-phosphate (non-oxidative stage): step 1/1. In terms of biological role, catalyzes the reversible conversion of ribose-5-phosphate to ribulose 5-phosphate. This Jannaschia sp. (strain CCS1) protein is Ribose-5-phosphate isomerase A.